The following is a 47-amino-acid chain: uncharacterized protein (47 aa).

Disordered stretches follow at residues 1–20 (MSTD…EEWQ) and 25–47 (EKEK…NRKG). Residues 25 to 40 (EKEKDENNRLFQEQKQ) are compositionally biased toward basic and acidic residues.

This is an uncharacterized protein from Dictyostelium discoideum (Social amoeba).